We begin with the raw amino-acid sequence, 368 residues long: Ferrochelatase (368 aa).

Fe cation-binding residues include H209 and E290. The disordered stretch occupies residues 347–368; sequence REEQEQQAHISREEARRLGADQ.

Belongs to the ferrochelatase family.

Its subcellular location is the cytoplasm. It carries out the reaction heme b + 2 H(+) = protoporphyrin IX + Fe(2+). The protein operates within porphyrin-containing compound metabolism; protoheme biosynthesis; protoheme from protoporphyrin-IX: step 1/1. Its function is as follows. Catalyzes the ferrous insertion into protoporphyrin IX. The protein is Ferrochelatase of Janthinobacterium sp. (strain Marseille) (Minibacterium massiliensis).